A 336-amino-acid chain; its full sequence is Biotin synthase (336 aa).

In terms of domain architecture, Radical SAM core spans 54-281; the sequence is QAIQLSTLLS…KSYVRLSAGR (228 aa). The [4Fe-4S] cluster site is built by C69, C73, and C76. [2Fe-2S] cluster contacts are provided by C113, C144, C204, and R276.

The protein belongs to the radical SAM superfamily. Biotin synthase family. As to quaternary structure, homodimer. Requires [4Fe-4S] cluster as cofactor. [2Fe-2S] cluster is required as a cofactor.

The catalysed reaction is (4R,5S)-dethiobiotin + (sulfur carrier)-SH + 2 reduced [2Fe-2S]-[ferredoxin] + 2 S-adenosyl-L-methionine = (sulfur carrier)-H + biotin + 2 5'-deoxyadenosine + 2 L-methionine + 2 oxidized [2Fe-2S]-[ferredoxin]. The protein operates within cofactor biosynthesis; biotin biosynthesis; biotin from 7,8-diaminononanoate: step 2/2. Functionally, catalyzes the conversion of dethiobiotin (DTB) to biotin by the insertion of a sulfur atom into dethiobiotin via a radical-based mechanism. The sequence is that of Biotin synthase from Actinobacillus pleuropneumoniae serotype 7 (strain AP76).